The sequence spans 190 residues: Elongation factor P-like protein (190 aa).

The protein belongs to the elongation factor P family.

This is Elongation factor P-like protein from Shigella dysenteriae serotype 1 (strain Sd197).